The chain runs to 101 residues: MVDFAFELRKAQDTGKIVMGARKSIQYAKMGGAKLIIVARNARPDIKEDIEYYARLSGIPVYEFEGTSVELGTLLGRPHTVSALAVVDPGESRILALGGKE.

This sequence belongs to the eukaryotic ribosomal protein eL30 family.

This is Large ribosomal subunit protein eL30 (rpl30e) from Thermococcus celer.